A 324-amino-acid chain; its full sequence is Acetyl-coenzyme A carboxylase carboxyl transferase subunit alpha (324 aa).

Residues 37–291 enclose the CoA carboxyltransferase C-terminal domain; that stretch reads ILEDKLENLE…DLMLRKTFEQ (255 aa).

The protein belongs to the AccA family. Acetyl-CoA carboxylase is a heterohexamer composed of biotin carboxyl carrier protein (AccB), biotin carboxylase (AccC) and two subunits each of ACCase subunit alpha (AccA) and ACCase subunit beta (AccD).

It localises to the cytoplasm. The enzyme catalyses N(6)-carboxybiotinyl-L-lysyl-[protein] + acetyl-CoA = N(6)-biotinyl-L-lysyl-[protein] + malonyl-CoA. The protein operates within lipid metabolism; malonyl-CoA biosynthesis; malonyl-CoA from acetyl-CoA: step 1/1. In terms of biological role, component of the acetyl coenzyme A carboxylase (ACC) complex. First, biotin carboxylase catalyzes the carboxylation of biotin on its carrier protein (BCCP) and then the CO(2) group is transferred by the carboxyltransferase to acetyl-CoA to form malonyl-CoA. This is Acetyl-coenzyme A carboxylase carboxyl transferase subunit alpha from Bacillus cereus (strain Q1).